The sequence spans 351 residues: Uroporphyrinogen decarboxylase (351 aa).

Substrate contacts are provided by residues 25–29, aspartate 74, tyrosine 151, serine 206, and histidine 325; that span reads RQAGR.

The protein belongs to the uroporphyrinogen decarboxylase family. As to quaternary structure, homodimer.

It localises to the cytoplasm. It carries out the reaction uroporphyrinogen III + 4 H(+) = coproporphyrinogen III + 4 CO2. The protein operates within porphyrin-containing compound metabolism; protoporphyrin-IX biosynthesis; coproporphyrinogen-III from 5-aminolevulinate: step 4/4. Functionally, catalyzes the decarboxylation of four acetate groups of uroporphyrinogen-III to yield coproporphyrinogen-III. In Pelodictyon phaeoclathratiforme (strain DSM 5477 / BU-1), this protein is Uroporphyrinogen decarboxylase.